We begin with the raw amino-acid sequence, 164 residues long: Interleukin-36 beta (164 aa).

Residues Met-1–Gln-4 constitute a propeptide that is removed on maturation.

The protein belongs to the IL-1 family. Interacts with cargo receptor TMED10; the interaction mediates the translocation from the cytoplasm into the ERGIC (endoplasmic reticulum-Golgi intermediate compartment) and thereby secretion. N-terminal truncation leads to a dramatic enhancement of its activity (&gt;1000-fold). In terms of tissue distribution, expression at low levels in tonsil, bone marrow, heart, placenta, lung, testis and colon but not in any hematopoietic cell lines. Not detected in adipose tissue. Expressed at higher levels in psoriatic plaques than in symptomless psoriatic skin or healthy control skin. Increased levels are not detected in inflamed joint tissue.

Its subcellular location is the cytoplasm. The protein resides in the secreted. In terms of biological role, cytokine that binds to and signals through the IL1RL2/IL-36R receptor which in turn activates NF-kappa-B and MAPK signaling pathways in target cells linked to a pro-inflammatory response. Part of the IL-36 signaling system that is thought to be present in epithelial barriers and to take part in local inflammatory response; similar to the IL-1 system with which it shares the coreceptor IL1RAP. Stimulates production of interleukin-6 and interleukin-8 in synovial fibrobasts, articular chondrocytes and mature adipocytes. Induces expression of a number of antimicrobial peptides including beta-defensins 4 and 103 as well as a number of matrix metalloproteases. Seems to be involved in skin inflammatory response by acting on keratinocytes, dendritic cells and indirectly on T-cells to drive tissue infiltration, cell maturation and cell proliferation. In cultured keratinocytes induces the expression of macrophage, T-cell, and neutrophil chemokines, such as CCL3, CCL4, CCL5, CCL2, CCL17, CCL22, CL20, CCL5, CCL2, CCL17, CCL22, CXCL8, CCL20 and CXCL1, and the production of pro-inflammatory cytokines such as TNF-alpha, IL-8 and IL-6. This is Interleukin-36 beta from Homo sapiens (Human).